A 319-amino-acid polypeptide reads, in one-letter code: Cyclin-dependent kinase 4 (319 aa).

The Protein kinase domain maps to 9–295 (YEPVAEIGVG…ASDALLHPFF (287 aa)). ATP-binding positions include 15 to 23 (IGVGAYGTV) and K38. The Proton acceptor role is filled by D140. T172 is modified (phosphothreonine; by CAK).

Belongs to the protein kinase superfamily. CMGC Ser/Thr protein kinase family. CDC2/CDKX subfamily. In terms of assembly, forms a stable complex with D-type G1 cyclins.

The protein resides in the cytoplasm. It carries out the reaction L-seryl-[protein] + ATP = O-phospho-L-seryl-[protein] + ADP + H(+). It catalyses the reaction L-threonyl-[protein] + ATP = O-phospho-L-threonyl-[protein] + ADP + H(+). Phosphorylation at Thr-172 is necessary for enzymatic activity. Probably involved in the control of the cell cycle. This is Cyclin-dependent kinase 4 (cdk4) from Xenopus laevis (African clawed frog).